Reading from the N-terminus, the 389-residue chain is Succinate--CoA ligase [ADP-forming] subunit beta (389 aa).

The ATP-grasp domain maps to 9–244; that stretch reads KQLLAEYGIP…KTQEDETEVT (236 aa). Residues lysine 46, 53-55, glycine 102, and glutamate 107 contribute to the ATP site; that span reads GRG. Residues asparagine 199 and aspartate 213 each contribute to the Mg(2+) site. Residues asparagine 264 and 321-323 each bind substrate; that span reads GIV.

This sequence belongs to the succinate/malate CoA ligase beta subunit family. In terms of assembly, heterotetramer of two alpha and two beta subunits. Requires Mg(2+) as cofactor.

The enzyme catalyses succinate + ATP + CoA = succinyl-CoA + ADP + phosphate. It carries out the reaction GTP + succinate + CoA = succinyl-CoA + GDP + phosphate. It participates in carbohydrate metabolism; tricarboxylic acid cycle; succinate from succinyl-CoA (ligase route): step 1/1. Functionally, succinyl-CoA synthetase functions in the citric acid cycle (TCA), coupling the hydrolysis of succinyl-CoA to the synthesis of either ATP or GTP and thus represents the only step of substrate-level phosphorylation in the TCA. The beta subunit provides nucleotide specificity of the enzyme and binds the substrate succinate, while the binding sites for coenzyme A and phosphate are found in the alpha subunit. The sequence is that of Succinate--CoA ligase [ADP-forming] subunit beta from Xanthomonas axonopodis pv. citri (strain 306).